A 1170-amino-acid chain; its full sequence is Anion exchange protein 3 (1170 aa).

Over 1-656 the chain is Cytoplasmic; it reads MGRSYNEKDF…DLKDALDTQC (656 aa). Disordered stretches follow at residues 17 to 96, 112 to 167, and 239 to 267; these read FHHT…PQLS, FHME…TTRG, and HLVK…RRKR. Over residues 32-53 the composition is skewed to basic residues; the sequence is RFRKRVLSMDRRRKRKRKKKKT. A compositionally biased stretch (acidic residues) spans 67 to 76; sequence VDEEEAESEI. Over residues 246-259 the composition is skewed to polar residues; sequence RCQLPRSSNGSPPL. The next 5 helical transmembrane spans lie at 657–677, 702–722, 744–764, 774–794, and 828–848; these read IAAV…FGGL, FSLL…LLVF, IGFW…SFLV, IFAF…LIKV, and PNTA…AFFL. Positions 657 to 1170 are membrane (anion exchange); that stretch reads IAAVIFIYFA…DEYNEIHMLV (514 aa). The Cytoplasmic portion of the chain corresponds to 849-863; that stretch reads RKLRNSRFLGGKVRR. The next 5 membrane-spanning stretches (helical) occupy residues 864-884, 919-939, 966-986, 1020-1063, and 1104-1124; these read VIGD…DILI, FPVW…ILIF, LLLI…WLTA, RVTG…LTGI, and IVLL…FILI.

It belongs to the anion exchanger (TC 2.A.31) family. Widely expressed at low levels.

Its subcellular location is the cell membrane. The enzyme catalyses hydrogencarbonate(in) + chloride(out) = hydrogencarbonate(out) + chloride(in). Its function is as follows. Sodium-independent anion exchanger which mediates the electroneutral exchange of chloride for bicarbonate ions across the cell membrane. May be involved in the regulation of intracellular pH, and the modulation of cardiac action potential. The sequence is that of Anion exchange protein 3 from Danio rerio (Zebrafish).